A 536-amino-acid polypeptide reads, in one-letter code: Putative cysteine ligase BshC (536 aa).

It belongs to the BshC family.

Involved in bacillithiol (BSH) biosynthesis. May catalyze the last step of the pathway, the addition of cysteine to glucosamine malate (GlcN-Mal) to generate BSH. This Anoxybacillus flavithermus (strain DSM 21510 / WK1) protein is Putative cysteine ligase BshC.